A 500-amino-acid polypeptide reads, in one-letter code: L-arabinose isomerase (500 aa).

Residues glutamate 306, glutamate 333, histidine 350, and histidine 450 each coordinate Mn(2+).

This sequence belongs to the arabinose isomerase family. In terms of assembly, homohexamer. The cofactor is Mn(2+).

The catalysed reaction is beta-L-arabinopyranose = L-ribulose. It functions in the pathway carbohydrate degradation; L-arabinose degradation via L-ribulose; D-xylulose 5-phosphate from L-arabinose (bacterial route): step 1/3. Catalyzes the conversion of L-arabinose to L-ribulose. This Yersinia pestis bv. Antiqua (strain Nepal516) protein is L-arabinose isomerase.